The primary structure comprises 194 residues: Pyridoxal 5'-phosphate synthase subunit PdxT (194 aa).

50–52 provides a ligand contact to L-glutamine; that stretch reads GES. Cysteine 82 acts as the Nucleophile in catalysis. Residues arginine 109 and 136–137 contribute to the L-glutamine site; that span reads IR. Active-site charge relay system residues include histidine 172 and glutamate 174.

The protein belongs to the glutaminase PdxT/SNO family. As to quaternary structure, in the presence of PdxS, forms a dodecamer of heterodimers. Only shows activity in the heterodimer.

The catalysed reaction is aldehydo-D-ribose 5-phosphate + D-glyceraldehyde 3-phosphate + L-glutamine = pyridoxal 5'-phosphate + L-glutamate + phosphate + 3 H2O + H(+). It carries out the reaction L-glutamine + H2O = L-glutamate + NH4(+). It functions in the pathway cofactor biosynthesis; pyridoxal 5'-phosphate biosynthesis. Catalyzes the hydrolysis of glutamine to glutamate and ammonia as part of the biosynthesis of pyridoxal 5'-phosphate. The resulting ammonia molecule is channeled to the active site of PdxS. The polypeptide is Pyridoxal 5'-phosphate synthase subunit PdxT (Streptococcus pneumoniae (strain CGSP14)).